Reading from the N-terminus, the 58-residue chain is Small ribosomal subunit protein bS21 (58 aa).

A compositionally biased stretch (basic and acidic residues) spans 32–42 (ARRREHYEKPS). Residues 32–58 (ARRREHYEKPSVRRKKKSEAARKRRWH) form a disordered region. Basic residues predominate over residues 43-58 (VRRKKKSEAARKRRWH).

It belongs to the bacterial ribosomal protein bS21 family.

The polypeptide is Small ribosomal subunit protein bS21 (Moorella thermoacetica (strain ATCC 39073 / JCM 9320)).